Here is a 387-residue protein sequence, read N- to C-terminus: Eukaryotic translation initiation factor 3 subunit M (387 aa).

Residues 181–340 (LSSKVMIELL…RKVHISSTMH (160 aa)) form the PCI domain.

This sequence belongs to the eIF-3 subunit M family. In terms of assembly, component of the eukaryotic translation initiation factor 3 (eIF-3) complex. The eIF-3 complex interacts with pix.

It localises to the cytoplasm. The protein resides in the golgi apparatus. Its function is as follows. Component of the eukaryotic translation initiation factor 3 (eIF-3) complex, which is involved in protein synthesis of a specialized repertoire of mRNAs and, together with other initiation factors, stimulates binding of mRNA and methionyl-tRNAi to the 40S ribosome. The eIF-3 complex specifically targets and initiates translation of a subset of mRNAs involved in cell proliferation. This chain is Eukaryotic translation initiation factor 3 subunit M, found in Drosophila pseudoobscura pseudoobscura (Fruit fly).